Consider the following 160-residue polypeptide: Probable transcriptional regulator YgiV (160 aa).

Represses expression of mcbR. The sequence is that of Probable transcriptional regulator YgiV (ygiV) from Escherichia coli O157:H7.